The chain runs to 394 residues: Phosphoglycerate kinase (394 aa).

Residues D21–N23, R36, H59–R62, R118, and R151 each bind substrate. S183 carries the post-translational modification Phosphoserine. K201 provides a ligand contact to ATP. Position 299 is a phosphothreonine (T299). Residues N316, E323, and G350–S353 contribute to the ATP site.

This sequence belongs to the phosphoglycerate kinase family. In terms of assembly, monomer.

The protein localises to the cytoplasm. It carries out the reaction (2R)-3-phosphoglycerate + ATP = (2R)-3-phospho-glyceroyl phosphate + ADP. Its pathway is carbohydrate degradation; glycolysis; pyruvate from D-glyceraldehyde 3-phosphate: step 2/5. This Geobacillus stearothermophilus (Bacillus stearothermophilus) protein is Phosphoglycerate kinase.